A 778-amino-acid polypeptide reads, in one-letter code: Endonuclease MutS2 (778 aa).

328–335 (GPNTGGKT) is a binding site for ATP. In terms of domain architecture, Smr spans 703–778 (LDLRGKRYEE…GSGCTIANLG (76 aa)).

It belongs to the DNA mismatch repair MutS family. MutS2 subfamily. In terms of assembly, homodimer. Binds to stalled ribosomes, contacting rRNA.

Functionally, endonuclease that is involved in the suppression of homologous recombination and thus may have a key role in the control of bacterial genetic diversity. Its function is as follows. Acts as a ribosome collision sensor, splitting the ribosome into its 2 subunits. Detects stalled/collided 70S ribosomes which it binds and splits by an ATP-hydrolysis driven conformational change. Acts upstream of the ribosome quality control system (RQC), a ribosome-associated complex that mediates the extraction of incompletely synthesized nascent chains from stalled ribosomes and their subsequent degradation. Probably generates substrates for RQC. The sequence is that of Endonuclease MutS2 from Streptococcus equi subsp. zooepidemicus (strain H70).